The sequence spans 142 residues: Hydrogenase maturation factor HypA (142 aa).

Residue H2 coordinates Ni(2+). Residues C73, C76, C109, and C112 each coordinate Zn(2+).

Belongs to the HypA/HybF family.

In terms of biological role, involved in the maturation of [NiFe] hydrogenases. Required for nickel insertion into the metal center of the hydrogenase. The chain is Hydrogenase maturation factor HypA from Methanopyrus kandleri (strain AV19 / DSM 6324 / JCM 9639 / NBRC 100938).